A 438-amino-acid chain; its full sequence is Elongation factor 1-alpha (438 aa).

Residues 5–228 form the tr-type G domain; sequence KPHLNLVVIG…ALDSLEPPPK (224 aa). A G1 region spans residues 14 to 21; it reads GHVDHGKS. 14 to 21 is a binding site for GTP; that stretch reads GHVDHGKS. S21 contributes to the Mg(2+) binding site. The interval 70-74 is G2; it reads GVTIA. Residues 91–94 form a G3 region; sequence DAPG. Residues 91–95 and 153–156 contribute to the GTP site; these read DAPGH and NKMD. The G4 stretch occupies residues 153–156; sequence NKMD. A G5 region spans residues 194–196; sequence SAW.

This sequence belongs to the TRAFAC class translation factor GTPase superfamily. Classic translation factor GTPase family. EF-Tu/EF-1A subfamily.

The protein resides in the cytoplasm. The catalysed reaction is GTP + H2O = GDP + phosphate + H(+). In terms of biological role, GTP hydrolase that promotes the GTP-dependent binding of aminoacyl-tRNA to the A-site of ribosomes during protein biosynthesis. The polypeptide is Elongation factor 1-alpha (Staphylothermus marinus (strain ATCC 43588 / DSM 3639 / JCM 9404 / F1)).